Reading from the N-terminus, the 169-residue chain is Der GTPase-activating protein YihI (169 aa).

2 disordered regions span residues 1–92 (MKPS…EKPM) and 146–169 (SYDDDEEEEEDEKQEDMMRLLRGN). Positions 10-19 (SKGHAKARRK) are enriched in basic residues. The segment covering 20–30 (TREELDQEARD) has biased composition (basic and acidic residues). Basic residues predominate over residues 31 to 40 (RKRQKKRRGH). Residues 49–58 (GNTTSGSKGQ) show a composition bias toward polar residues. Positions 147–159 (YDDDEEEEEDEKQ) are enriched in acidic residues. Positions 160 to 169 (EDMMRLLRGN) are enriched in basic and acidic residues.

Belongs to the YihI family. As to quaternary structure, interacts with Der.

A GTPase-activating protein (GAP) that modifies Der/EngA GTPase function. May play a role in ribosome biogenesis. The protein is Der GTPase-activating protein YihI of Escherichia coli O1:K1 / APEC.